Consider the following 498-residue polypeptide: ATP synthase subunit beta, chloroplastic (498 aa).

172–179 (GGAGVGKT) is an ATP binding site.

The protein belongs to the ATPase alpha/beta chains family. F-type ATPases have 2 components, CF(1) - the catalytic core - and CF(0) - the membrane proton channel. CF(1) has five subunits: alpha(3), beta(3), gamma(1), delta(1), epsilon(1). CF(0) has four main subunits: a(1), b(1), b'(1) and c(9-12).

Its subcellular location is the plastid. It is found in the chloroplast thylakoid membrane. The enzyme catalyses ATP + H2O + 4 H(+)(in) = ADP + phosphate + 5 H(+)(out). Its function is as follows. Produces ATP from ADP in the presence of a proton gradient across the membrane. The catalytic sites are hosted primarily by the beta subunits. This is ATP synthase subunit beta, chloroplastic from Nicotiana sp. (Tobacco).